Consider the following 113-residue polypeptide: MGEHAIKRHMRQRKPTKHPLAQKRGARILVFTDDPRRSVLIVPGCHLDSMRREKNAYYFQDGNALVGMVVSGGTVEYDADDRTYVVQLTDGRHTTESSFEHSSPSRSPQSDDL.

Disordered regions lie at residues 1 to 22 and 90 to 113; these read MGEHAIKRHMRQRKPTKHPLAQ and DGRHTTESSFEHSSPSRSPQSDDL. Basic and acidic residues predominate over residues 90-99; it reads DGRHTTESSF. Residues 100 to 113 show a composition bias toward low complexity; it reads EHSSPSRSPQSDDL.

This is an uncharacterized protein from Mycobacterium tuberculosis (strain ATCC 25618 / H37Rv).